The following is a 323-amino-acid chain: Sporulation-delaying protein SdpB (323 aa).

6 helical membrane-spanning segments follow: residues 27–49, 70–92, 112–134, 155–177, 219–241, and 248–270; these read LLGF…SYSA, SINF…IGWR, LTID…VTLL, TVLF…NAAL, IVVI…ISNI, and LVLG…FGLI.

The protein localises to the cell membrane. Required for the maturation of SdpC to SDP. Not required for SdpC signal peptide cleavage, secretion from the cell or disulfide bond formation. The polypeptide is Sporulation-delaying protein SdpB (Bacillus subtilis (strain 168)).